The following is a 217-amino-acid chain: Thymidylate kinase (217 aa).

Position 16 to 23 (16 to 23 (GIDGAGKT)) interacts with ATP.

It belongs to the thymidylate kinase family.

The catalysed reaction is dTMP + ATP = dTDP + ADP. Phosphorylation of dTMP to form dTDP in both de novo and salvage pathways of dTTP synthesis. The polypeptide is Thymidylate kinase (Xylella fastidiosa (strain M23)).